Here is a 368-residue protein sequence, read N- to C-terminus: Chorismate synthase (368 aa).

Arginine 46 is a binding site for NADP(+). Residues 124-126 (RAS), glycine 284, 299-303 (KPTPS), and arginine 326 contribute to the FMN site.

The protein belongs to the chorismate synthase family. The cofactor is FMNH2.

The enzyme catalyses 5-O-(1-carboxyvinyl)-3-phosphoshikimate = chorismate + phosphate. It functions in the pathway metabolic intermediate biosynthesis; chorismate biosynthesis; chorismate from D-erythrose 4-phosphate and phosphoenolpyruvate: step 7/7. In terms of biological role, catalyzes the anti-1,4-elimination of the C-3 phosphate and the C-6 proR hydrogen from 5-enolpyruvylshikimate-3-phosphate (EPSP) to yield chorismate, which is the branch point compound that serves as the starting substrate for the three terminal pathways of aromatic amino acid biosynthesis. This reaction introduces a second double bond into the aromatic ring system. This Pyrobaculum aerophilum (strain ATCC 51768 / DSM 7523 / JCM 9630 / CIP 104966 / NBRC 100827 / IM2) protein is Chorismate synthase.